The sequence spans 279 residues: Urease accessory protein UreD (279 aa).

It belongs to the UreD family. UreD, UreF and UreG form a complex that acts as a GTP-hydrolysis-dependent molecular chaperone, activating the urease apoprotein by helping to assemble the nickel containing metallocenter of UreC. The UreE protein probably delivers the nickel.

Its subcellular location is the cytoplasm. In terms of biological role, required for maturation of urease via the functional incorporation of the urease nickel metallocenter. The chain is Urease accessory protein UreD from Nostoc punctiforme (strain ATCC 29133 / PCC 73102).